The primary structure comprises 86 residues: U-actitoxin-Avd10a (86 aa).

The first 20 residues, 1-20 (MSRIAILLFVAFLLVAGISA), serve as a signal peptide directing secretion. The propeptide occupies 21-42 (KSTAHFKKNVLADLFKERRFNA). The ShKT domain occupies 51–86 (CVNIDVDSFCDGMAERGACNIIPQMATNCAKACNSC). Cystine bridges form between Cys51–Cys86, Cys60–Cys79, and Cys69–Cys83.

This sequence belongs to the sea anemone type 1 potassium channel toxin family. Type 1b subfamily.

It is found in the secreted. The protein resides in the nematocyst. Inhibits voltage-gated potassium channels (Kv1/KCNA). The sequence is that of U-actitoxin-Avd10a from Anemonia viridis (Snakelocks anemone).